The following is a 77-amino-acid chain: Chassatide C2 (77 aa).

The signal sequence occupies residues 1–24 (MAKFANYLMLFLLVASLVMLEAQS). The propeptide at 25–44 (SDTIKVPDLGKRLLMNRDPN) is removed in mature form. A cross-link (cyclopeptide (Gly-Asn)) is located at residues 45–75 (GIPCAESCVWIPCTITALMGCSCKNNVCYNN). Disulfide bonds link C48–C65, C52–C67, and C57–C72. Methionine sulfoxide; in form chassatide chaC2A is present on M63. Positions 76 to 77 (EL) are cleaved as a propeptide — removed in mature form.

It belongs to the cyclotide family. Bracelet subfamily. Post-translationally, this is a cyclic peptide. In terms of tissue distribution, expressed in fruit, pedicel and stem but not in leaf and root (at protein level).

Its function is as follows. Chassatide C2: Probably participates in a plant defense mechanism. Has no activity against bacteria up to a concentration of 80 uM. Has cytotoxic but no hemolytic activity. In terms of biological role, chassatide C2A: Probably participates in a plant defense mechanism. Has no activity against bacteria up to a concentration of 80 uM. Has no cytotoxic and no hemolytic activity. The protein is Chassatide C2 of Chassalia chartacea (Chassalia curviflora).